Reading from the N-terminus, the 732-residue chain is Catalase-peroxidase (732 aa).

The tract at residues 1-23 (MSEQSKCPVTGRTAGHPVAGGGM) is disordered. A cross-link (tryptophyl-tyrosyl-methioninium (Trp-Tyr) (with M-246)) is located at residues 97–220 (WHSAGTYRTS…LAAVQMGLIY (124 aa)). The active-site Proton acceptor is the His98. The segment at residues 220 to 246 (YVNPEGPDGNPDPVAAGRDIRETFARM) is a cross-link (tryptophyl-tyrosyl-methioninium (Tyr-Met) (with W-97)). Residue His261 coordinates heme b.

The protein belongs to the peroxidase family. Peroxidase/catalase subfamily. In terms of assembly, homodimer or homotetramer. Requires heme b as cofactor. Formation of the three residue Trp-Tyr-Met cross-link is important for the catalase, but not the peroxidase activity of the enzyme.

The enzyme catalyses H2O2 + AH2 = A + 2 H2O. It catalyses the reaction 2 H2O2 = O2 + 2 H2O. Bifunctional enzyme with both catalase and broad-spectrum peroxidase activity. This Chlorobium limicola (strain DSM 245 / NBRC 103803 / 6330) protein is Catalase-peroxidase.